Reading from the N-terminus, the 339-residue chain is Phenylalanine--tRNA ligase alpha subunit (339 aa).

A Mg(2+)-binding site is contributed by Glu254.

The protein belongs to the class-II aminoacyl-tRNA synthetase family. Phe-tRNA synthetase alpha subunit type 1 subfamily. As to quaternary structure, tetramer of two alpha and two beta subunits. Requires Mg(2+) as cofactor.

The protein resides in the cytoplasm. The catalysed reaction is tRNA(Phe) + L-phenylalanine + ATP = L-phenylalanyl-tRNA(Phe) + AMP + diphosphate + H(+). This Clostridium beijerinckii (strain ATCC 51743 / NCIMB 8052) (Clostridium acetobutylicum) protein is Phenylalanine--tRNA ligase alpha subunit.